Here is a 732-residue protein sequence, read N- to C-terminus: Subtilisin-like protease SBT4.13 (732 aa).

A signal peptide spans 1–24 (MATLAASSSLLSCLLVLFLSSVSA). Residues 25-109 (VTDDKQVYIV…VFPNKKLQLQ (85 aa)) constitute a propeptide, activation peptide. An Inhibitor I9 domain is found at 31–108 (VYIVYMGSLS…SVFPNKKLQL (78 aa)). Residues 113–579 (SWDFMGLKEG…SGHVDPIAAS (467 aa)) form the Peptidase S8 domain. Asp141 (charge relay system) is an active-site residue. N-linked (GlcNAc...) asparagine glycosylation occurs at Asn172. His196 acts as the Charge relay system in catalysis. Residue Asn219 is glycosylated (N-linked (GlcNAc...) asparagine). Positions 352 to 436 (DYPLVYGKSA…GLLTEDFESL (85 aa)) constitute a PA domain. N-linked (GlcNAc...) asparagine glycosylation occurs at Asn458. Ser518 (charge relay system) is an active-site residue. Asn555, Asn600, Asn648, and Asn658 each carry an N-linked (GlcNAc...) asparagine glycan.

The protein belongs to the peptidase S8 family. Post-translationally, the C-terminal propeptide is autocleaved.

The protein resides in the secreted. The chain is Subtilisin-like protease SBT4.13 from Arabidopsis thaliana (Mouse-ear cress).